The sequence spans 104 residues: MDKADFLKGLPVYNKTNFSRFHADSVCKASNRRPSVYLPTREYPSEQIIVTEKTNILLRYLHQQWDKKNAAKKREQEQAEGEGGSPAPPRKIARTDSQEMNEDS.

A compositionally biased stretch (basic and acidic residues) spans 67-77 (KKNAAKKREQE). Residues 67-104 (KKNAAKKREQEQAEGEGGSPAPPRKIARTDSQEMNEDS) are disordered.

This sequence belongs to the DDA1 family. As to quaternary structure, component of numerous DCX (DDB1-CUL4-X-box) E3 ubiquitin-protein ligase complexes which consist of a core of DDB1, cullin-4 (CUL4A or CUL4B), DDA1 and RBX1.

It functions in the pathway protein modification; protein ubiquitination. Its function is as follows. Functions as a component of numerous distinct DCX (DDB1-CUL4-X-box) E3 ubiquitin-protein ligase complexes which mediate the ubiquitination and subsequent proteasomal degradation of target proteins. In the DCX complexes, acts as a scaffolding subunit required to stabilize the complex. This chain is DET1- and DDB1-associated protein 1, found in Danio rerio (Zebrafish).